The chain runs to 150 residues: UPF0756 membrane protein A1S_2121 (150 aa).

The next 4 helical transmembrane spans lie at 22-42 (SQNAAVTIAAGILIVIKITPL), 45-65 (FFPYIQAHGLNLGILILTIGV), 83-103 (FISFKSLVAIAIGLLVAWLGG), and 115-135 (VVAGLLIGTVAGVALLRGVPV).

It belongs to the UPF0756 family.

It is found in the cell membrane. The sequence is that of UPF0756 membrane protein A1S_2121 from Acinetobacter baumannii (strain ATCC 17978 / DSM 105126 / CIP 53.77 / LMG 1025 / NCDC KC755 / 5377).